The following is a 336-amino-acid chain: Tryptophan--tRNA ligase (336 aa).

ATP is bound by residues 11–13 (TTT) and 19–20 (GN). The 'HIGH' region motif lies at 12–20 (TTGIPHLGN). Aspartate 145 serves as a coordination point for L-tryptophan. Residues 157–159 (GRD), leucine 196, and 203–207 (KMSKS) each bind ATP. A 'KMSKS' region motif is present at residues 203–207 (KMSKS).

This sequence belongs to the class-I aminoacyl-tRNA synthetase family. Homodimer.

Its subcellular location is the cytoplasm. It carries out the reaction tRNA(Trp) + L-tryptophan + ATP = L-tryptophyl-tRNA(Trp) + AMP + diphosphate + H(+). Functionally, catalyzes the attachment of tryptophan to tRNA(Trp). The sequence is that of Tryptophan--tRNA ligase from Neisseria meningitidis serogroup A / serotype 4A (strain DSM 15465 / Z2491).